Consider the following 174-residue polypeptide: UPF0398 protein llmg_0513 (174 aa).

This sequence belongs to the UPF0398 family.

This is UPF0398 protein llmg_0513 from Lactococcus lactis subsp. cremoris (strain MG1363).